Here is a 696-residue protein sequence, read N- to C-terminus: TBC1 domain family member 12 (696 aa).

The residue at position 1 (M1) is an N-acetylmethionine. Disordered stretches follow at residues 1–59 (MMGP…PPPR), 91–121 (PAAR…RRRR), and 156–234 (CCLA…ARAR). The segment covering 46-55 (PPEEAGEEEA) has biased composition (acidic residues). Over residues 108–118 (RQDRRGPEEAR) the composition is skewed to basic and acidic residues. S205 is modified (phosphoserine). Residues 209-222 (LLPSAGPSAPLPAA) show a composition bias toward low complexity. Position 236 is a phosphoserine (S236). Positions 330–373 (KSVEEALRHRQEYDEMVAEAKKREIKEAHKRKRIMKERFKQEES) form a coiled coil. The 209-residue stretch at 405 to 613 (GLPPSVRGKV…RVWDVFCRDG (209 aa)) folds into the Rab-GAP TBC domain. A Phosphoserine modification is found at S668. T669 carries the post-translational modification Phosphothreonine.

Interacts with RAB11A; this interaction recruits TBC1D12 to RAB11A-positive recycling endosomes.

Its subcellular location is the endosome. In terms of biological role, RAB11A-binding protein that plays a role in neurite outgrowth. This is TBC1 domain family member 12 (Tbc1d12) from Mus musculus (Mouse).